Consider the following 185-residue polypeptide: Ribosome-recycling factor (185 aa).

It belongs to the RRF family.

It localises to the cytoplasm. Functionally, responsible for the release of ribosomes from messenger RNA at the termination of protein biosynthesis. May increase the efficiency of translation by recycling ribosomes from one round of translation to another. This chain is Ribosome-recycling factor, found in Shewanella baltica (strain OS223).